Here is a 559-residue protein sequence, read N- to C-terminus: N-acetylglucosamine-6-sulfatase (559 aa).

The segment at 1 to 26 is disordered; that stretch reads MRFLSLAPDRPRRGGPRHLPSGSPAP. Residues 1 to 47 form the signal peptide; that stretch reads MRFLSLAPDRPRRGGPRHLPSGSPAPPPPPPLLLLLLLGGCLGVSGA. 3 residues coordinate Ca(2+): Asp62, Asp63, and Cys98. The active-site Nucleophile is the Cys98. Cys98 carries the post-translational modification 3-oxoalanine (Cys). Asn118, Asn124, Asn190, Asn205, Asn217, Asn286, and Asn324 each carry an N-linked (GlcNAc...) asparagine glycan. Residues Asp333 and Asn334 each contribute to the Ca(2+) site. N-linked (GlcNAc...) asparagine glycosylation is found at Asn369, Asn394, Asn412, Asn429, Asn456, and Asn487. Residue Ser548 is modified to Phosphoserine.

The protein belongs to the sulfatase family. Ca(2+) serves as cofactor. Post-translationally, processed by internal peptidase. In terms of processing, the conversion to 3-oxoalanine (also known as C-formylglycine, FGly), of a serine or cysteine residue in prokaryotes and of a cysteine residue in eukaryotes, is critical for catalytic activity.

It is found in the lysosome. The enzyme catalyses Hydrolysis of the 6-sulfate groups of the N-acetyl-D-glucosamine 6-sulfate units of heparan sulfate and keratan sulfate.. Its function is as follows. Hydrolyzes 6-sulfate groups in N-acetyl-d-glucosaminide units of heparin sulfate and keratan sulfate. This is N-acetylglucosamine-6-sulfatase (GNS) from Capra hircus (Goat).